We begin with the raw amino-acid sequence, 289 residues long: Small ribosomal subunit protein uS2C (289 aa).

It belongs to the universal ribosomal protein uS2 family. Component of the small ribosomal subunit. Mature ribosomes consist of a small (40S) and a large (60S) subunit. The 40S subunit contains about 33 different proteins and 1 molecule of RNA (18S). The 60S subunit contains about 49 different proteins and 3 molecules of RNA (25S, 5.8S and 5S). Interacts with rps21.

It is found in the cytoplasm. Its function is as follows. Required for the assembly and/or stability of the 40S ribosomal subunit. Required for the processing of the 20S rRNA-precursor to mature 18S rRNA in a late step of the maturation of 40S ribosomal subunits. This chain is Small ribosomal subunit protein uS2C (rps0c), found in Schizosaccharomyces japonicus (strain yFS275 / FY16936) (Fission yeast).